The following is a 357-amino-acid chain: MKASIYDFTLKELSQLLKPSFRAKQLYLWLYAKYKTSFKDMQNNFSKDFIAYLEREFALRTIEITHVRESVDGSKKYLFKSLRDNHTFEAVLLKMKDKKIDAETNAILEREKYTVCVSCQIGCQVGCSFCFTQKGGFVRNLKASEIIQQALLIKEDNNLPLEKALNIVFMGMGEPLNNLDEVCKAIEIFNTGMQISPKRITISTSGVADKIPILAGKNLGVQLAISLHAVDDKTRSSLMPLNKKYNIECVLNEVRKWPLEQRKRVMFEYLLIKDLNDSLDCAKKLLKLLNGIKSKVNLILFNPHEGSKFERPSLENARMFADFLNSKGLLCTIRESKALDIEAACGQLREKKLSQQI.

Catalysis depends on Glu-89, which acts as the Proton acceptor. The 232-residue stretch at Glu-109–Asp-340 folds into the Radical SAM core domain. Cysteines 116 and 345 form a disulfide. 3 residues coordinate [4Fe-4S] cluster: Cys-123, Cys-127, and Cys-130. Residues Gly-173–Glu-174, Ser-203, Ser-226–His-228, and Asn-302 each bind S-adenosyl-L-methionine. The active-site S-methylcysteine intermediate is Cys-345.

This sequence belongs to the radical SAM superfamily. RlmN family. The cofactor is [4Fe-4S] cluster.

The protein localises to the cytoplasm. The catalysed reaction is adenosine(2503) in 23S rRNA + 2 reduced [2Fe-2S]-[ferredoxin] + 2 S-adenosyl-L-methionine = 2-methyladenosine(2503) in 23S rRNA + 5'-deoxyadenosine + L-methionine + 2 oxidized [2Fe-2S]-[ferredoxin] + S-adenosyl-L-homocysteine. It carries out the reaction adenosine(37) in tRNA + 2 reduced [2Fe-2S]-[ferredoxin] + 2 S-adenosyl-L-methionine = 2-methyladenosine(37) in tRNA + 5'-deoxyadenosine + L-methionine + 2 oxidized [2Fe-2S]-[ferredoxin] + S-adenosyl-L-homocysteine. Functionally, specifically methylates position 2 of adenine 2503 in 23S rRNA and position 2 of adenine 37 in tRNAs. m2A2503 modification seems to play a crucial role in the proofreading step occurring at the peptidyl transferase center and thus would serve to optimize ribosomal fidelity. The protein is Dual-specificity RNA methyltransferase RlmN of Helicobacter pylori (strain ATCC 700392 / 26695) (Campylobacter pylori).